A 317-amino-acid polypeptide reads, in one-letter code: Melanocyte-stimulating hormone receptor (317 aa).

Residues 1 to 37 (MPVLGSQRRLLGSLNCTPPATFPLTLAPNRTGPQCLE) are Extracellular-facing. Residue Asn29 is glycosylated (N-linked (GlcNAc...) asparagine). A helical transmembrane segment spans residues 38 to 63 (VSIPDGLFLSLGLVSLVENVLVVAAI). The Cytoplasmic portion of the chain corresponds to 64-72 (AKNRNLHSP). A helical transmembrane segment spans residues 73-93 (MYYFICCLAVSDLLVSVSNVL). Over 94–118 (ETAVMLLLEAGALAARAAVVQQLDN) the chain is Extracellular. The helical transmembrane segment at 119–140 (VIDMLICGSMVSSLCFLGAIAV) threads the bilayer. Residues 141 to 163 (DRYISIFYALRYHSVVTLPRAWR) are Cytoplasmic-facing. Residues 164–183 (IIAAIWVASILTSLLFITYY) form a helical membrane-spanning segment. At 184–191 (NHTVVLLC) the chain is on the extracellular side. The helical transmembrane segment at 192 to 211 (LVGFFIAMLALMAVLYVHML) threads the bilayer. At 212–240 (ARACQHARGIARLQKRQRPIHQGFGLKGA) the chain is on the cytoplasmic side. The helical transmembrane segment at 241-266 (ATLTILLGVFFLCWGPFFLHLSLIVL) threads the bilayer. The Extracellular segment spans residues 267 to 279 (CPQHPTCGCIFKN). The chain crosses the membrane as a helical span at residues 280 to 300 (FNLFLALIICNAIVDPLIYAF). The Cytoplasmic segment spans residues 301-317 (RSQELRKTLQEVLQCSW). A lipid anchor (S-palmitoyl cysteine) is attached at Cys315.

Belongs to the G-protein coupled receptor 1 family. As to quaternary structure, interacts with MGRN1, but does not undergo MGRN1-mediated ubiquitination; this interaction competes with GNAS-binding and thus inhibits agonist-induced cAMP production. Interacts with OPN3; the interaction results in a decrease in MC1R-mediated cAMP signaling and ultimately a decrease in melanin production in melanocytes.

It localises to the cell membrane. Functionally, receptor for MSH (alpha, beta and gamma) and ACTH. The activity of this receptor is mediated by G proteins which activate adenylate cyclase. Mediates melanogenesis, the production of eumelanin (black/brown) and phaeomelanin (red/yellow), via regulation of cAMP signaling in melanocytes. In Capreolus capreolus (European roe deer), this protein is Melanocyte-stimulating hormone receptor (MC1R).